The primary structure comprises 248 residues: Triosephosphate isomerase (248 aa).

Substrate is bound at residue 9 to 11 (NWK). H93 serves as the catalytic Electrophile. The active-site Proton acceptor is the E163. Substrate-binding positions include G169, S208, and 229-230 (GG).

The protein belongs to the triosephosphate isomerase family. Homodimer.

It is found in the cytoplasm. It catalyses the reaction D-glyceraldehyde 3-phosphate = dihydroxyacetone phosphate. Its pathway is carbohydrate biosynthesis; gluconeogenesis. It participates in carbohydrate degradation; glycolysis; D-glyceraldehyde 3-phosphate from glycerone phosphate: step 1/1. Its function is as follows. Involved in the gluconeogenesis. Catalyzes stereospecifically the conversion of dihydroxyacetone phosphate (DHAP) to D-glyceraldehyde-3-phosphate (G3P). In Jannaschia sp. (strain CCS1), this protein is Triosephosphate isomerase.